Consider the following 154-residue polypeptide: 6,7-dimethyl-8-ribityllumazine synthase (154 aa).

5-amino-6-(D-ribitylamino)uracil is bound by residues 22-23 (FN), 56-58 (AFE), and 80-82 (TVI). 85 to 86 (AT) contacts (2S)-2-hydroxy-3-oxobutyl phosphate. The active-site Proton donor is the His88. Phe113 provides a ligand contact to 5-amino-6-(D-ribitylamino)uracil. Arg127 lines the (2S)-2-hydroxy-3-oxobutyl phosphate pocket.

The protein belongs to the DMRL synthase family. In terms of assembly, forms an icosahedral capsid composed of 60 subunits, arranged as a dodecamer of pentamers. Can interact with riboflavin synthase, forming a lumazine synthase/riboflavin synthase complex, also designated as 'heavy riboflavin synthase complex', which consists of a trimer of riboflavin synthase enclosed within the icosahedral structure composed of 60 subunits of 6,7-dimethyl-8-ribityllumazine synthase.

The enzyme catalyses (2S)-2-hydroxy-3-oxobutyl phosphate + 5-amino-6-(D-ribitylamino)uracil = 6,7-dimethyl-8-(1-D-ribityl)lumazine + phosphate + 2 H2O + H(+). It participates in cofactor biosynthesis; riboflavin biosynthesis; riboflavin from 2-hydroxy-3-oxobutyl phosphate and 5-amino-6-(D-ribitylamino)uracil: step 1/2. Functionally, catalyzes the formation of 6,7-dimethyl-8-ribityllumazine by condensation of 5-amino-6-(D-ribitylamino)uracil with 3,4-dihydroxy-2-butanone 4-phosphate. This is the penultimate step in the biosynthesis of riboflavin. Is able to use the non-natural R enantiomer of 3,4-dihydroxy-2-butanone 4-phosphate as a substrate, but with less efficiency than the natural S enantiomer. Cannot use unphosphorylated 3,4-dihydroxy-2-butanone, 3,4-dihydroxy-2-butanone 3-phosphate or diacetyl as substrates. This Bacillus subtilis (strain 168) protein is 6,7-dimethyl-8-ribityllumazine synthase (ribH).